Reading from the N-terminus, the 1013-residue chain is Chitin synthase A (1013 aa).

A glycan (N-linked (GlcNAc...) asparagine) is linked at asparagine 10. Disordered regions lie at residues 26 to 83 and 95 to 218; these read RYSY…AADW and ERAD…RRGV. Over residues 64-81 the composition is skewed to low complexity; sequence TASRPASPARPWSPTRAA. Residues 154-173 show a composition bias toward polar residues; the sequence is TISSRHGPQGSVQSFTSEST. N-linked (GlcNAc...) asparagine glycans are attached at residues asparagine 194 and asparagine 316. The next 5 membrane-spanning stretches (helical) occupy residues 646-666, 686-706, 721-741, 759-779, and 792-811; these read LLQLIFTYFGLANFYLAFFFI, IFIVLRYACVLVMCLQFIFSM, MIVYSIVMAYTAFCTLYLIVL, LFVNIVVSLLSTVGLYFFTSF, and AQYFALLPSYICTLQCYAFC. An N-linked (GlcNAc...) asparagine glycan is attached at asparagine 837. 2 helical membrane passes run 892–912 and 919–939; these read VSVWMVANVVLAMAVSEVYGV and VYLAIILWSVAVLAIIRAIGS. Asparagine 967, asparagine 980, asparagine 989, and asparagine 995 each carry an N-linked (GlcNAc...) asparagine glycan.

It belongs to the chitin synthase family. Class II subfamily. As to expression, mainly expressed in the metulae, phialides, and conidia.

It localises to the cell membrane. It is found in the cell septum. It catalyses the reaction [(1-&gt;4)-N-acetyl-beta-D-glucosaminyl](n) + UDP-N-acetyl-alpha-D-glucosamine = [(1-&gt;4)-N-acetyl-beta-D-glucosaminyl](n+1) + UDP + H(+). Functionally, polymerizes chitin, a structural polymer of the cell wall and septum, by transferring the sugar moiety of UDP-GlcNAc to the non-reducing end of the growing chitin polymer. Seems not to be involved in hyphal growth, but, with chsC, chsA shares critical functions in hyphal wall integrity and differentiation. ChsA and chsC share also overlapping roles in septum formation. Invoved in the production of the asexual spores (conidia) that are formed by differentiated aerial hyphae called conidiophores. This Emericella nidulans (strain FGSC A4 / ATCC 38163 / CBS 112.46 / NRRL 194 / M139) (Aspergillus nidulans) protein is Chitin synthase A.